A 153-amino-acid polypeptide reads, in one-letter code: Ribonuclease VapC6 (153 aa).

In terms of domain architecture, PINc spans 6–152; sequence VFIDSSVMVG…EKVDFIEIIK (147 aa). Aspartate 9 and aspartate 120 together coordinate Mg(2+).

Belongs to the PINc/VapC protein family. Mg(2+) serves as cofactor.

Functionally, toxic component of a type II toxin-antitoxin (TA) system. An RNase. This Methanocaldococcus jannaschii (strain ATCC 43067 / DSM 2661 / JAL-1 / JCM 10045 / NBRC 100440) (Methanococcus jannaschii) protein is Ribonuclease VapC6.